The following is a 132-amino-acid chain: Ribosome-binding factor A (132 aa).

The protein belongs to the RbfA family. Monomer. Binds 30S ribosomal subunits, but not 50S ribosomal subunits or 70S ribosomes.

It is found in the cytoplasm. In terms of biological role, one of several proteins that assist in the late maturation steps of the functional core of the 30S ribosomal subunit. Associates with free 30S ribosomal subunits (but not with 30S subunits that are part of 70S ribosomes or polysomes). Required for efficient processing of 16S rRNA. May interact with the 5'-terminal helix region of 16S rRNA. In Treponema denticola (strain ATCC 35405 / DSM 14222 / CIP 103919 / JCM 8153 / KCTC 15104), this protein is Ribosome-binding factor A.